Reading from the N-terminus, the 471-residue chain is tRNA-2-methylthio-N(6)-dimethylallyladenosine synthase (471 aa).

Residues Leu-31–Asn-149 enclose the MTTase N-terminal domain. [4Fe-4S] cluster contacts are provided by Cys-40, Cys-76, Cys-110, Cys-186, Cys-190, and Cys-193. The region spanning Arg-172–Glu-402 is the Radical SAM core domain. In terms of domain architecture, TRAM spans Ala-405 to Glu-468.

It belongs to the methylthiotransferase family. MiaB subfamily. As to quaternary structure, monomer. Requires [4Fe-4S] cluster as cofactor.

It localises to the cytoplasm. It carries out the reaction N(6)-dimethylallyladenosine(37) in tRNA + (sulfur carrier)-SH + AH2 + 2 S-adenosyl-L-methionine = 2-methylsulfanyl-N(6)-dimethylallyladenosine(37) in tRNA + (sulfur carrier)-H + 5'-deoxyadenosine + L-methionine + A + S-adenosyl-L-homocysteine + 2 H(+). Its function is as follows. Catalyzes the methylthiolation of N6-(dimethylallyl)adenosine (i(6)A), leading to the formation of 2-methylthio-N6-(dimethylallyl)adenosine (ms(2)i(6)A) at position 37 in tRNAs that read codons beginning with uridine. In Thermoanaerobacter pseudethanolicus (strain ATCC 33223 / 39E) (Clostridium thermohydrosulfuricum), this protein is tRNA-2-methylthio-N(6)-dimethylallyladenosine synthase.